Here is a 180-residue protein sequence, read N- to C-terminus: SAGA-associated factor 11 homolog (180 aa).

The SGF11-type zinc-finger motif lies at 98 to 119 (CSCPNCNRIVAASRFAPHLEKC). A disordered region spans residues 138–180 (RDGGNYFGADEDDEDDADWSGEKRKKKIAPVRTNGSKKNGKTS). The segment covering 146-156 (ADEDDEDDADW) has biased composition (acidic residues).

Belongs to the SGF11 family. In terms of assembly, component of some SAGA transcription coactivator-HAT complexes. Within the SAGA complex, participates in a subcomplex of SAGA called the DUB module (deubiquitination module).

The protein localises to the nucleus. In terms of biological role, component of the transcription regulatory histone acetylation (HAT) complex SAGA, a multiprotein complex that activates transcription by remodeling chromatin and mediating histone acetylation and deubiquitination. Within the SAGA complex, participates in a subcomplex that specifically deubiquitinates histone H2B. The SAGA complex is recruited to specific gene promoters by activators, where it is required for transcription. The sequence is that of SAGA-associated factor 11 homolog from Aedes aegypti (Yellowfever mosquito).